Reading from the N-terminus, the 606-residue chain is NADH-ubiquinone oxidoreductase chain 5 (606 aa).

Transmembrane regions (helical) follow at residues 4–24 (FSSLSLVTLLLLTMPIMMMSL), 43–63 (AFITSMIPTMMFIHSGQELII), 87–107 (MMFTPVALFVTWSIMEFSMWY), 117–137 (FFKYLLLFLITMLILVTANNL), 140–160 (LFIGWEGVGIMSFLLIGWWYG), 171–191 (AVLYNRIGDIGFILAMAWFLT), 213–233 (LIGLALAATGKSAQFGLHPWL), 241–261 (TPVSALLHSSTMVVAGIFLLI), 272–292 (FIQSITLCLGAITTLFTAMCA), 310–330 (LGLMMVTIGINQPYLAFLHIC), 366–386 (MPFTTTALIVGSLALTGMPFL), 413–433 (LIATSFTAIYSTRIIFFALLG), 457–477 (LLIGSLFAGYIISNNIPPTTI), 482–502 (MPYYLKTTALIVTILGFILAL), and 582–602 (GLIKLYFLSFLITILISMMLF).

In terms of assembly, core subunit of respiratory chain NADH dehydrogenase (Complex I) which is composed of 45 different subunits.

The protein resides in the mitochondrion inner membrane. The enzyme catalyses a ubiquinone + NADH + 5 H(+)(in) = a ubiquinol + NAD(+) + 4 H(+)(out). Functionally, core subunit of the mitochondrial membrane respiratory chain NADH dehydrogenase (Complex I) which catalyzes electron transfer from NADH through the respiratory chain, using ubiquinone as an electron acceptor. Essential for the catalytic activity and assembly of complex I. This is NADH-ubiquinone oxidoreductase chain 5 (MT-ND5) from Bos indicus (Zebu).